The chain runs to 348 residues: D-erythrose-4-phosphate dehydrogenase (348 aa).

Residue 12-13 (RI) coordinates NAD(+). Substrate is bound by residues 154-156 (SCT), arginine 200, 213-214 (TR), and arginine 236. Residue cysteine 155 is the Nucleophile of the active site. Asparagine 318 is an NAD(+) binding site.

It belongs to the glyceraldehyde-3-phosphate dehydrogenase family. Epd subfamily. In terms of assembly, homotetramer.

The protein resides in the cytoplasm. It catalyses the reaction D-erythrose 4-phosphate + NAD(+) + H2O = 4-phospho-D-erythronate + NADH + 2 H(+). Its pathway is cofactor biosynthesis; pyridoxine 5'-phosphate biosynthesis; pyridoxine 5'-phosphate from D-erythrose 4-phosphate: step 1/5. Its function is as follows. Catalyzes the NAD-dependent conversion of D-erythrose 4-phosphate to 4-phosphoerythronate. The chain is D-erythrose-4-phosphate dehydrogenase from Erwinia tasmaniensis (strain DSM 17950 / CFBP 7177 / CIP 109463 / NCPPB 4357 / Et1/99).